The sequence spans 254 residues: Nickel import ATP-binding protein NikD (254 aa).

In terms of domain architecture, ABC transporter spans 2–241; sequence PQQIELRNIA…PKHTVTRSLV (240 aa). An ATP-binding site is contributed by 36-43; that stretch reads GGSGSGKS.

It belongs to the ABC transporter superfamily. Nickel importer (TC 3.A.1.5.3) family. As to quaternary structure, the complex is composed of two ATP-binding proteins (NikD and NikE), two transmembrane proteins (NikB and NikC) and a solute-binding protein (NikA).

It is found in the cell inner membrane. It catalyses the reaction Ni(2+)(out) + ATP + H2O = Ni(2+)(in) + ADP + phosphate + H(+). In terms of biological role, part of the ABC transporter complex NikABCDE involved in nickel import. Responsible for energy coupling to the transport system. This Escherichia coli (strain K12) protein is Nickel import ATP-binding protein NikD.